The following is a 682-amino-acid chain: Protein PilJ (682 aa).

At 1-14 the chain is on the cytoplasmic side; the sequence is MKKINAGNLFAGMR. The chain crosses the membrane as a helical span at residues 15–38; sequence SSSVIAGLFIVLIVSIVLLFANFA. Residues 39 to 306 are Periplasmic-facing; sequence YLNTQSNHDK…DGFENLAGGR (268 aa). Residues 307-333 traverse the membrane as a helical segment; it reads SINLFAGYALGALALASIILIGLVMVR. Residues 334–682 lie on the Cytoplasmic side of the membrane; that stretch reads ETNRRLAETA…FKLPEGVEQA (349 aa). Positions 347-398 constitute an HAMP domain; it reads DRNQAAILRLLDEIADLADGDLTVAATVTEDFTGAIADSINYSIDQLRELVE. In terms of domain architecture, Methyl-accepting transducer spans 403-639; it reads TAVQVAAAAQ…HISNTMNVIQ (237 aa).

This sequence belongs to the methyl-accepting chemotaxis (MCP) protein family.

The protein resides in the cell inner membrane. Its function is as follows. May be a part of a signal-transduction system that regulates twitching motility by controlling pilus function (extension and retraction). In Pseudomonas aeruginosa (strain ATCC 15692 / DSM 22644 / CIP 104116 / JCM 14847 / LMG 12228 / 1C / PRS 101 / PAO1), this protein is Protein PilJ (pilJ).